Consider the following 465-residue polypeptide: UDP-N-acetylmuramoylalanine--D-glutamate ligase (465 aa).

ATP is bound at residue 124 to 130 (GSDGKTT).

This sequence belongs to the MurCDEF family.

It is found in the cytoplasm. It carries out the reaction UDP-N-acetyl-alpha-D-muramoyl-L-alanine + D-glutamate + ATP = UDP-N-acetyl-alpha-D-muramoyl-L-alanyl-D-glutamate + ADP + phosphate + H(+). Its pathway is cell wall biogenesis; peptidoglycan biosynthesis. In terms of biological role, cell wall formation. Catalyzes the addition of glutamate to the nucleotide precursor UDP-N-acetylmuramoyl-L-alanine (UMA). The protein is UDP-N-acetylmuramoylalanine--D-glutamate ligase of Ruminiclostridium cellulolyticum (strain ATCC 35319 / DSM 5812 / JCM 6584 / H10) (Clostridium cellulolyticum).